The sequence spans 125 residues: Fluoride-specific ion channel FluC (125 aa).

Helical transmembrane passes span 1-21, 34-54, 72-92, and 101-121; these read MFAT…ARYG, FPWA…FLFF, TGGL…LVLF, and LLYM…GAWI. 2 residues coordinate Na(+): glycine 76 and threonine 79.

Belongs to the fluoride channel Fluc/FEX (TC 1.A.43) family.

Its subcellular location is the cell inner membrane. It catalyses the reaction fluoride(in) = fluoride(out). Its activity is regulated as follows. Na(+) is not transported, but it plays an essential structural role and its presence is essential for fluoride channel function. Fluoride-specific ion channel. Important for reducing fluoride concentration in the cell, thus reducing its toxicity. This Acidithiobacillus ferrooxidans (strain ATCC 23270 / DSM 14882 / CIP 104768 / NCIMB 8455) (Ferrobacillus ferrooxidans (strain ATCC 23270)) protein is Fluoride-specific ion channel FluC.